The chain runs to 1220 residues: Plasma membrane calcium-transporting ATPase 1 (1220 aa).

Residue G2 is modified to N-acetylglycine. At 2 to 105 the chain is on the cytoplasmic side; the sequence is GDMANNSVAY…KTFLQLVWEA (104 aa). Residues S8 and S17 each carry the phosphoserine modification. A helical transmembrane segment spans residues 106–126; sequence LQDVTLIILEIAAIVSLGLSF. Over 127–154 the chain is Extracellular; sequence YQPPEGDNALCGEVSVGEEEGEGETGWI. A helical membrane pass occupies residues 155-175; sequence EGAAILLSVVCVVLVTAFNDW. The Cytoplasmic portion of the chain corresponds to 176–366; sequence SKEKQFRGLQ…KEKSVLQGKL (191 aa). A disordered region spans residues 297-356; the sequence is EEEKKDEKKKEKKNKKQDGAIENRNKAKAQDGAAMEMQPLKSEEGGDGDEKDKKKANLPK. Basic and acidic residues-rich tracts occupy residues 312–325 and 337–356; these read KQDGAIENRNKAKA and KSEEGGDGDEKDKKKANLPK. S338 is modified (phosphoserine). Residues 367 to 386 form a helical membrane-spanning segment; the sequence is TKLAVQIGKAGLLMSAITVI. Residues 387–418 lie on the Extracellular side of the membrane; that stretch reads ILVLYFVIDTFWVQKRPWLAECTPIYIQYFVK. The chain crosses the membrane as a helical span at residues 419–439; that stretch reads FFIIGVTVLVVAVPEGLPLAV. The Cytoplasmic portion of the chain corresponds to 440–855; sequence TISLAYSVKK…RNVYDSISKF (416 aa). D475 functions as the 4-aspartylphosphate intermediate in the catalytic mechanism. D475, T477, D797, and D801 together coordinate Mg(2+). A helical transmembrane segment spans residues 856 to 876; sequence LQFQLTVNVVAVIVAFTGACI. The Extracellular portion of the chain corresponds to 877 to 882; it reads TQDSPL. A helical transmembrane segment spans residues 883 to 903; the sequence is KAVQMLWVNLIMDTLASLALA. Residues 904–927 lie on the Cytoplasmic side of the membrane; it reads TEPPTESLLLRKPYGRNKPLISRT. The chain crosses the membrane as a helical span at residues 928–948; it reads MMKNILGHAFYQLVVVFTLLF. The Extracellular portion of the chain corresponds to 949–971; the sequence is AGEKFFDIDSGRNAPLHAPPSEH. Residues 972–991 traverse the membrane as a helical segment; it reads YTIVFNTFVLMQLFNEINAR. Over 992–1005 the chain is Cytoplasmic; that stretch reads KIHGERNVFEGIFN. Residues 1006–1027 traverse the membrane as a helical segment; it reads NAIFCTIVLGTFVVQIIIVQFG. Residues 1028-1039 are Extracellular-facing; it reads GKPFSCSELSIE. A helical membrane pass occupies residues 1040–1060; the sequence is QWLWSIFLGMGTLLWGQLIST. At 1061-1220 the chain is on the cytoplasmic side; that stretch reads IPTSRLKFLK…SPLHSLETSL (160 aa). The tract at residues 1100-1117 is calmodulin-binding subdomain A; sequence LRRGQILWFRGLNRIQTQ. Phosphothreonine; by PKC is present on T1116. The calmodulin-binding subdomain B stretch occupies residues 1118-1127; the sequence is IRVVNAFRSS. A required for basolateral membrane targeting region spans residues 1118–1220; that stretch reads IRVVNAFRSS…SPLHSLETSL (103 aa). A phosphoserine mark is found at S1140 and S1155. A disordered region spans residues 1160–1220; it reads PLIDDTDAED…SPLHSLETSL (61 aa). The residue at position 1165 (T1165) is a Phosphothreonine. 2 positions are modified to phosphoserine: S1178 and S1182. A compositionally biased stretch (polar residues) spans 1200–1220; that stretch reads MNKSATSSSPGSPLHSLETSL.

Belongs to the cation transport ATPase (P-type) (TC 3.A.3) family. Type IIB subfamily. As to quaternary structure, monomer. Dimer. Oligomer. Calmodulin binding. Interacts with PDZD11. Interacts with SLC35G1 and STIM1. Interacts with YWHAE; interacts with the monomeric and dimeric forms of the YWHAE but prefer the monomer form; this interaction inhibits calcium-transporting ATPase activity. Interacts with NPTN; this interaction stabilizes ATP2B1 and increases ATPase activity; this interaction controls T cell calcium homeostasis following T cell activation. Interacts with EPB41; regulates small intestinal calcium absorption through regulation of membrane expression of ATP2B1.

The protein localises to the cell membrane. It localises to the basolateral cell membrane. It is found in the synapse. Its subcellular location is the presynaptic cell membrane. The protein resides in the cytoplasmic vesicle. The protein localises to the secretory vesicle. It localises to the synaptic vesicle membrane. The enzyme catalyses Ca(2+)(in) + ATP + H2O = Ca(2+)(out) + ADP + phosphate + H(+). Catalyzes the hydrolysis of ATP coupled with the transport of calcium from the cytoplasm to the extracellular space thereby maintaining intracellular calcium homeostasis. Plays a role in blood pressure regulation through regulation of intracellular calcium concentration and nitric oxide production leading to regulation of vascular smooth muscle cells vasoconstriction. Positively regulates bone mineralization through absorption of calcium from the intestine. Plays dual roles in osteoclast differentiation and survival by regulating RANKL-induced calcium oscillations in preosteoclasts and mediating calcium extrusion in mature osteoclasts. Regulates insulin sensitivity through calcium/calmodulin signaling pathway by regulating AKT1 activation and NOS3 activation in endothelial cells. May play a role in synaptic transmission by modulating calcium and proton dynamics at the synaptic vesicles. The chain is Plasma membrane calcium-transporting ATPase 1 from Sus scrofa (Pig).